A 620-amino-acid chain; its full sequence is MYGFVNHALELLVIRNYGPEVWEDIKKEAQLDEEGQFLVRIIYDDSKTYDLVAAASKVLNLNAGEILQMFGKMFFVFCQESGYDTILRVLGSNVREFLQNLDALHDHLATIYPGMRAPSFRCTDAEKGKGLILHYYSEREGLQDIVIGIIKTVAQQIHGTEIDMKVIQQRNEECDHTQFLIEEKESKEEDFYEDLDRFEENGTQESRISPYTFCKAFPFHIIFDRNLVVTQCGNAIYRVLPQLQPGNCSLLSVFSLVRPHIDISFHGILSHINTVFVLRSKEGLLDVEKLECEDELTGAEISCLRLKGQMIYLPEADSILFLCSPSVMNLDDLTRRGLYLSDIPLHDATRDLVLLGEQFREEYKLTQELEILTDRLQLTLRALEDEKKKTDTLLYSVLPPSVANELRHKRPVPAKRYDNVTILFSGIVGFNAFCSKHASGEGAMKIVNLLNDLYTRFDTLTDSRKNPFVYKVETVGDKYMTVSGLPEPCIHHARSICHLALDMMEIAGQVQVDGESVQITIGIHTGEVVTGVIGQRMPRYCLFGNTVNLTSRTETTGEKGKINVSEYTYRCLMSPENSDPLFHLEHRGPVSMKGKKEPMQVWFLSRKNTGTEETNEEDEN.

H105 provides a ligand contact to heme. The Guanylate cyclase domain maps to T421–E554.

This sequence belongs to the adenylyl cyclase class-4/guanylyl cyclase family. As to quaternary structure, the active enzyme is formed by a heterodimer of an alpha and a beta subunit. Heterodimer with GUCY1A1. Can also form inactive homodimers in vitro. Requires heme as cofactor.

The protein localises to the cytoplasm. It carries out the reaction GTP = 3',5'-cyclic GMP + diphosphate. Activated by nitric oxide in the presence of magnesium or manganese ions. Its function is as follows. Mediates responses to nitric oxide (NO) by catalyzing the biosynthesis of the signaling molecule cGMP. This Mus musculus (Mouse) protein is Guanylate cyclase soluble subunit beta-1 (Gucy1b1).